The primary structure comprises 494 residues: 4-trimethylaminobutyraldehyde dehydrogenase (494 aa).

S2 carries the post-translational modification N-acetylserine. The residue at position 30 (K30) is an N6-acetyllysine; alternate. K30 is modified (N6-succinyllysine; alternate). At K59 the chain carries N6-succinyllysine. NAD(+)-binding positions include K180 and G232 to T236. E254 (proton acceptor) is an active-site residue. The Nucleophile role is filled by C288. K298 carries the post-translational modification N6-acetyllysine. Residue K303 is modified to N6-acetyllysine; alternate. An N6-succinyllysine; alternate modification is found at K303. K344 bears the N6-acetyllysine mark. E391 is a binding site for NAD(+).

The protein belongs to the aldehyde dehydrogenase family. Homotetramer.

The protein resides in the cytoplasm. Its subcellular location is the cytosol. It catalyses the reaction 4-(trimethylamino)butanal + NAD(+) + H2O = 4-(trimethylamino)butanoate + NADH + 2 H(+). The enzyme catalyses an aldehyde + NAD(+) + H2O = a carboxylate + NADH + 2 H(+). The catalysed reaction is 4-aminobutanal + NAD(+) + H2O = 4-aminobutanoate + NADH + 2 H(+). It carries out the reaction formaldehyde + NAD(+) + H2O = formate + NADH + 2 H(+). It catalyses the reaction acetaldehyde + NAD(+) + H2O = acetate + NADH + 2 H(+). The enzyme catalyses imidazole-4-acetaldehyde + NAD(+) + H2O = imidazole-4-acetate + NADH + 2 H(+). The catalysed reaction is acrolein + NAD(+) + H2O = acrylate + NADH + 2 H(+). It carries out the reaction (5-hydroxyindol-3-yl)acetaldehyde + NAD(+) + H2O = (5-hydroxyindol-3-yl)acetate + NADH + 2 H(+). It catalyses the reaction 3,4-dihydroxyphenylacetaldehyde + NAD(+) + H2O = 3,4-dihydroxyphenylacetate + NADH + 2 H(+). The enzyme catalyses spermine monoaldehyde + NAD(+) + H2O = N-(2-carboxyethyl)spermidine + NADH + 2 H(+). The catalysed reaction is propanal + NAD(+) + H2O = propanoate + NADH + 2 H(+). It carries out the reaction butanal + NAD(+) + H2O = butanoate + NADH + 2 H(+). It catalyses the reaction pentanal + NAD(+) + H2O = pentanoate + NADH + 2 H(+). The enzyme catalyses hexanal + NAD(+) + H2O = hexanoate + NADH + 2 H(+). It participates in amine and polyamine biosynthesis; carnitine biosynthesis. Converts gamma-trimethylaminobutyraldehyde into gamma-butyrobetaine with high efficiency (in vitro). Can catalyze the irreversible oxidation of a broad range of aldehydes to the corresponding acids in an NAD-dependent reaction, but with low efficiency. Catalyzes the oxidation of aldehydes arising from biogenic amines and polyamines. The chain is 4-trimethylaminobutyraldehyde dehydrogenase from Mus musculus (Mouse).